A 96-amino-acid chain; its full sequence is Protein Vpr (96 aa).

The interval 1 to 42 (MEQPPEDQGPQREPYNEWTLELLEELKNEAVRHFPREYLHGL) is homooligomerization. Phosphoserine; by host occurs at positions 79, 94, and 96.

Belongs to the HIV-1 VPR protein family. Homooligomer, may form homodimer. Interacts with p6-gag region of the Pr55 Gag precursor protein through a (Leu-X-X)4 motif near the C-terminus of the P6gag protein. Interacts with host UNG. May interact with host RAD23A/HHR23A. Interacts with host VPRBP/DCAF1, leading to hijack the CUL4A-RBX1-DDB1-DCAF1/VPRBP complex, mediating ubiquitination of host proteins such as TERT and ZGPAT and arrest of the cell cycle in G2 phase. Phosphorylated on several residues by host. These phosphorylations regulate VPR activity for the nuclear import of the HIV-1 pre-integration complex.

It is found in the virion. It localises to the host nucleus. The protein localises to the host extracellular space. In terms of biological role, during virus replication, may deplete host UNG protein, and incude G2-M cell cycle arrest. Acts by targeting specific host proteins for degradation by the 26S proteasome, through association with the cellular CUL4A-DDB1 E3 ligase complex by direct interaction with host VPRPB/DCAF-1. Cell cycle arrest reportedly occurs within hours of infection and is not blocked by antiviral agents, suggesting that it is initiated by the VPR carried into the virion. Additionally, VPR induces apoptosis in a cell cycle dependent manner suggesting that these two effects are mechanistically linked. Detected in the serum and cerebrospinal fluid of AIDS patient, VPR may also induce cell death to bystander cells. Functionally, during virus entry, plays a role in the transport of the viral pre-integration (PIC) complex to the host nucleus. This function is crucial for viral infection of non-dividing macrophages. May act directly at the nuclear pore complex, by binding nucleoporins phenylalanine-glycine (FG)-repeat regions. This is Protein Vpr from Homo sapiens (Human).